Consider the following 1017-residue polypeptide: Putative calcium-transporting ATPase 13, plasma membrane-type (1017 aa).

Met1 bears the N-acetylmethionine mark. Residues 1–147 (MRRNVSDHAE…NTYTRQPSKG (147 aa)) lie on the Cytoplasmic side of the membrane. The interaction with calmodulin stretch occupies residues 20–31 (LLELPKTLSKSN). A helical transmembrane segment spans residues 148–168 (LFHFVVEAFKDLTILILLGCA). Residues 169–186 (TLSLGFGIKEHGLKEGWY) lie on the Lumenal side of the membrane. The chain crosses the membrane as a helical span at residues 187 to 207 (DGGSIFVAVFLVVAVSAVSNF). Residues 208 to 336 (RQNRQFDKLS…NEQTPLQSRL (129 aa)) are Cytoplasmic-facing. A helical membrane pass occupies residues 337 to 356 (DKLTSSIGKVGLLVAFLVLL). The Lumenal portion of the chain corresponds to 357–393 (VLLIRYFTGTTKDESGNREYNGKTTKSDEIVNAVVKM). The chain crosses the membrane as a helical span at residues 394–411 (VAAAVTIIVVAIPEGLPL). The Cytoplasmic portion of the chain corresponds to 412 to 802 (AVTLTLAYSM…KWGRCVYNNI (391 aa)). The active-site 4-aspartylphosphate intermediate is the Asp449. Mg(2+)-binding residues include Asp747 and Asp751. Residues 803–821 (QKFIQFQLTVNVAALVINF) traverse the membrane as a helical segment. Topologically, residues 822-832 (VAAVSAGDVPL) are lumenal. The helical transmembrane segment at 833–853 (TAVQLLWVNLIMDTLGALALA) threads the bilayer. Residues 854 to 873 (TEKPTNDLMKKKPIGRVAPL) lie on the Cytoplasmic side of the membrane. A helical membrane pass occupies residues 874 to 896 (ITNIMWRNLLAQAFYQISVLLVL). Residues 897 to 905 (QFRGRSIFN) are Lumenal-facing. The chain crosses the membrane as a helical span at residues 906-926 (VTEKVKNTLIFNTFVLCQVFN). At 927-944 (EFNARSLEKKNVFKGLHK) the chain is on the cytoplasmic side. A helical membrane pass occupies residues 945–966 (NRLFIGIIVVTVVLQVVMVEFL). At 967–976 (KRFADTERLN) the chain is on the lumenal side. A helical transmembrane segment spans residues 977 to 998 (LGQWGVCIAIAAASWPIGWLVK). Topologically, residues 999–1002 (SVPV) are cytoplasmic.

The protein belongs to the cation transport ATPase (P-type) (TC 3.A.3) family. Type IIB subfamily.

The protein resides in the membrane. It catalyses the reaction Ca(2+)(in) + ATP + H2O = Ca(2+)(out) + ADP + phosphate + H(+). Its activity is regulated as follows. Activated by calmodulin. Its function is as follows. This magnesium-dependent enzyme catalyzes the hydrolysis of ATP coupled with the translocation of calcium from the cytosol out of the cell or into organelles. This Arabidopsis thaliana (Mouse-ear cress) protein is Putative calcium-transporting ATPase 13, plasma membrane-type (ACA13).